Consider the following 556-residue polypeptide: Phenylalanine--tRNA ligase beta subunit (556 aa).

Residues Leu278–Pro354 form the B5 domain. Residues Asp332, Asp338, Glu341, and Asp342 each coordinate Mg(2+).

This sequence belongs to the phenylalanyl-tRNA synthetase beta subunit family. Type 2 subfamily. As to quaternary structure, tetramer of two alpha and two beta subunits. Mg(2+) is required as a cofactor.

The protein localises to the cytoplasm. The catalysed reaction is tRNA(Phe) + L-phenylalanine + ATP = L-phenylalanyl-tRNA(Phe) + AMP + diphosphate + H(+). The sequence is that of Phenylalanine--tRNA ligase beta subunit from Pyrococcus furiosus (strain ATCC 43587 / DSM 3638 / JCM 8422 / Vc1).